The sequence spans 267 residues: Type III pantothenate kinase (267 aa).

ATP is bound at residue 6-13 (DSGNSRLK). Substrate is bound by residues Y96 and 103–106 (GADR). The Proton acceptor role is filled by D105. T131 lines the ATP pocket. Residue T181 participates in substrate binding.

It belongs to the type III pantothenate kinase family. In terms of assembly, homodimer. Requires NH4(+) as cofactor. K(+) serves as cofactor.

The protein resides in the cytoplasm. It catalyses the reaction (R)-pantothenate + ATP = (R)-4'-phosphopantothenate + ADP + H(+). Its pathway is cofactor biosynthesis; coenzyme A biosynthesis; CoA from (R)-pantothenate: step 1/5. In terms of biological role, catalyzes the phosphorylation of pantothenate (Pan), the first step in CoA biosynthesis. Its function is as follows. Activates transcription of the pertussis toxin operon in a BvgAS-dependent manner. May interact with the alpha subunit of RNA polymerase. This chain is Type III pantothenate kinase (coaX), found in Bordetella pertussis (strain Tohama I / ATCC BAA-589 / NCTC 13251).